The chain runs to 90 residues: MNDSVKTSLKRTLIGRVVSNKMDKTVTVLVEHRVKHPIYGKYVVRSKKYHAHDEANTYNEGDLVEIQETRPVSKTKAWAVARLVEAARVI.

This sequence belongs to the universal ribosomal protein uS17 family. In terms of assembly, part of the 30S ribosomal subunit.

In terms of biological role, one of the primary rRNA binding proteins, it binds specifically to the 5'-end of 16S ribosomal RNA. This chain is Small ribosomal subunit protein uS17, found in Burkholderia multivorans (strain ATCC 17616 / 249).